A 463-amino-acid chain; its full sequence is Fumarate hydratase class II (463 aa).

Residues 95 to 97, 126 to 129, 136 to 138, and threonine 184 contribute to the substrate site; these read SGT, HPND, and SSN. The Proton donor/acceptor role is filled by histidine 185. Serine 315 is an active-site residue. Substrate-binding positions include serine 316 and 321–323; that span reads KIN.

It belongs to the class-II fumarase/aspartase family. Fumarase subfamily. As to quaternary structure, homotetramer.

It is found in the cytoplasm. The catalysed reaction is (S)-malate = fumarate + H2O. The protein operates within carbohydrate metabolism; tricarboxylic acid cycle; (S)-malate from fumarate: step 1/1. Involved in the TCA cycle. Catalyzes the stereospecific interconversion of fumarate to L-malate. The polypeptide is Fumarate hydratase class II (Chlamydia muridarum (strain MoPn / Nigg)).